The chain runs to 54 residues: Large ribosomal subunit protein uL15 (54 aa).

Positions 1–30 (MPSRLRXTRKLRGHVSHGHGRIGKHRKHPG) are enriched in basic residues. The segment at 1–42 (MPSRLRXTRKLRGHVSHGHGRIGKHRKHPGGRGNAGGMHHHR) is disordered. Position 39 is a (3S)-3-hydroxyhistidine (histidine 39). The residue at position 47 (lysine 47) is an N6-acetyllysine.

This sequence belongs to the universal ribosomal protein uL15 family. As to quaternary structure, component of the large ribosomal subunit. Hydroxylated on His-39 by MINA.

It localises to the cytoplasm. In terms of biological role, component of the large ribosomal subunit. The ribosome is a large ribonucleoprotein complex responsible for the synthesis of proteins in the cell. The polypeptide is Large ribosomal subunit protein uL15 (RPL27A) (Sus scrofa (Pig)).